We begin with the raw amino-acid sequence, 381 residues long: MRTAVASPAALDSGRQEPLRVMVVDDSVVIRGLISRWIEAEPDMVVAASLRTGLDAVNQVERANPDVVVLDIEMPELDGISALPQLLAKKRNLIVIMASTLTRRNAEISFKALSLGAADYIPKPESTREIAAADIFKHDLIQKIRHLAAKRRRPAALASAREPEPRPIQATPVPAHSAPVLRPFSTHAPRALLIGSSTGGPQALMTLVAGIGPVIDRYPVLITQHMPPTFTTILAEHLARAAGRPAHEGVDEEIVKPGHIYLATGGRHMRLARKGTGAVIVLDDGPAVNFCKPAVDPLFTSAIDVWQGGILAVILTGMGSDGMRGGQQIVAAGGNVIAQDEASSVVWGMPGAAAQAGICAAVLPLQQIAPKLVRLFAGDHS.

Residues 20-138 enclose the Response regulatory domain; the sequence is RVMVVDDSVV…EIAAADIFKH (119 aa). 4-aspartylphosphate is present on aspartate 71. A disordered region spans residues 154 to 176; that stretch reads PAALASAREPEPRPIQATPVPAH. A CheB-type methylesterase domain is found at 183-373; sequence PFSTHAPRAL…PLQQIAPKLV (191 aa). Residues serine 197, histidine 225, and aspartate 321 contribute to the active site.

This sequence belongs to the CheB family. Post-translationally, phosphorylated by CheA. Phosphorylation of the N-terminal regulatory domain activates the methylesterase activity.

The protein resides in the cytoplasm. It catalyses the reaction [protein]-L-glutamate 5-O-methyl ester + H2O = L-glutamyl-[protein] + methanol + H(+). The catalysed reaction is L-glutaminyl-[protein] + H2O = L-glutamyl-[protein] + NH4(+). Functionally, involved in chemotaxis. Part of a chemotaxis signal transduction system that modulates chemotaxis in response to various stimuli. Catalyzes the demethylation of specific methylglutamate residues introduced into the chemoreceptors (methyl-accepting chemotaxis proteins or MCP) by CheR. Also mediates the irreversible deamidation of specific glutamine residues to glutamic acid. The polypeptide is Protein-glutamate methylesterase/protein-glutamine glutaminase (Nitrobacter hamburgensis (strain DSM 10229 / NCIMB 13809 / X14)).